The following is a 1113-amino-acid chain: Potassium channel subfamily U member 1 (1113 aa).

Residues methionine 1–glutamine 24 lie on the Extracellular side of the membrane. Residues alanine 25–phenylalanine 45 form a helical membrane-spanning segment. Residues arginine 46–valine 101 lie on the Cytoplasmic side of the membrane. Residues glycine 102–isoleucine 122 traverse the membrane as a helical segment. Topologically, residues asparagine 123–lysine 137 are extracellular. Residues isoleucine 138–tryptophan 158 form a helical membrane-spanning segment. Residues alanine 159–lysine 165 are Cytoplasmic-facing. The chain crosses the membrane as a helical span at residues phenylalanine 166–tyrosine 186. The Extracellular segment spans residues tyrosine 187 to leucine 188. The chain crosses the membrane as a helical; Voltage-sensor span at residues lysine 189 to isoleucine 209. Topologically, residues leucine 210–lysine 226 are cytoplasmic. A helical membrane pass occupies residues leucine 227–asparagine 247. Topologically, residues serine 248 to glutamine 259 are extracellular. The pore-forming intramembrane region spans threonine 260 to valine 282. Residues valine 283–arginine 290 are Extracellular-facing. The chain crosses the membrane as a helical span at residues isoleucine 291–methionine 311. The Cytoplasmic segment spans residues valine 312–lysine 1113. RCK N-terminal domains lie at lysine 331 to isoleucine 473 and glutamine 710 to isoleucine 881. Polar residues predominate over residues alanine 1047–proline 1081. Residues alanine 1047–proline 1091 are disordered.

It belongs to the potassium channel family. Calcium-activated (TC 1.A.1.3) subfamily. KCa1.1/KCNMA1 sub-subfamily. In terms of assembly, homotetramer; which constitutes the activated potassium channel. Interacts with LRRC52; this interaction changes channel gating properties, such as shifting gating to more negative potentials at a given pH.

The protein localises to the cell membrane. It is found in the cell projection. The protein resides in the cilium. It localises to the flagellum membrane. It carries out the reaction K(+)(in) = K(+)(out). With respect to regulation, regulated by changes in cytosolic pH; activated by alkalization. Not activated by intracellular Ca(2+). VU0546110 acts as a selective inhibitor. The auxiliary subunit LRRC52 shifts the activation of KCNU1 to more negative potentials at a given pH. In terms of biological role, testis-specific potassium channel activated by both intracellular pH and membrane voltage that mediates export of K(+). Represents the primary spermatozoan K(+) current. The channel underlies a pH-triggered membrane hyperpolarization during the process of sperm capacitation, as sperm encounter the alkaline environment near the ovum in the female reproductive tract, thereby playing an essential for male fertility. The chain is Potassium channel subfamily U member 1 (Kcnu1) from Rattus norvegicus (Rat).